Consider the following 540-residue polypeptide: MGFLTLFHMAFLAVSLFVSGALAAFGYTTSGNNFVIDAGSANPLIFSVSKSSCDINSIRYRGTELQYSKQGSHIGSGLGKATVSVSQINGSKSKFIKVTCVTSTLTQYMIVKEADSTIYMATYITAEPAIGELRFIARLLSDKLPYEYPYGEVSTTKGSSSTVEGSDVFVVNGQTRSKFYSSTRFIDEDSHCVYGGSDLTHVCIITPQQESSSGGPFFRDIDSNNAGESTNLYNYMNSGHVQTEDRRMGLHGPYLMTFSRSGIPKLKTVDISWFGELGVTGYVPDSQRGTVIGRATGIPSGFEGVVHWYNAAAQYWVRTAPNGDFTSPKMKPGTYTMVLYQTEFKVATSTVTVSAGKTTTASIASTFNTSHTTLFKIGEYDGQPTGFRNADKFLRMHPSDSRMSSWGPLTYTVGSSSLNDFPMAVFKSVNNPVTIKFNLGSAPSQATTLRIATTLSFAGARPQVVVNGWSAPAPAAPAKIDSRGVTRGAYRGYGEVYDVAVPAGKLISGTNTITISALSGSSGATFLSPNFIFDAVELFY.

Residues 1–23 form the signal peptide; sequence MGFLTLFHMAFLAVSLFVSGALA. Disulfide bonds link C53–C100 and C192–C203. N89 is a glycosylation site (N-linked (GlcNAc...) asparagine). An N-linked (GlcNAc...) asparagine glycan is attached at N368.

It belongs to the polysaccharide lyase 4 family.

It localises to the secreted. The enzyme catalyses Endotype eliminative cleavage of L-alpha-rhamnopyranosyl-(1-&gt;4)-alpha-D-galactopyranosyluronic acid bonds of rhamnogalacturonan I domains in ramified hairy regions of pectin leaving L-rhamnopyranose at the reducing end and 4-deoxy-4,5-unsaturated D-galactopyranosyluronic acid at the non-reducing end.. Functionally, could be a pectinolytic enzyme that hydrolyzes the alpha-L-rhamnopyranosyl-(1,4)-alpha-D-galacturonopyranosyl glycosidic linkage by beta-elimination, thereby generating oligosaccharides terminating at the non-reducing end with a hex-4-enopyranosyluronic acid residue. This Neurospora crassa (strain ATCC 24698 / 74-OR23-1A / CBS 708.71 / DSM 1257 / FGSC 987) protein is Putative rhamnogalacturonase (asd-1).